The chain runs to 268 residues: Endonuclease 8 1 (268 aa).

Catalysis depends on proline 2, which acts as the Schiff-base intermediate with DNA. Glutamate 3 (proton donor) is an active-site residue. The Proton donor; for beta-elimination activity role is filled by lysine 52. DNA-binding residues include arginine 125 and asparagine 166. An FPG-type zinc finger spans residues 234 to 268; the sequence is YVYRRAGEPCRVCGGVIRTALLEGRNVFWCPVCQT. Arginine 258 serves as the catalytic Proton donor; for delta-elimination activity.

The protein belongs to the FPG family. Zn(2+) is required as a cofactor.

It catalyses the reaction 2'-deoxyribonucleotide-(2'-deoxyribose 5'-phosphate)-2'-deoxyribonucleotide-DNA = a 3'-end 2'-deoxyribonucleotide-(2,3-dehydro-2,3-deoxyribose 5'-phosphate)-DNA + a 5'-end 5'-phospho-2'-deoxyribonucleoside-DNA + H(+). Its function is as follows. Involved in base excision repair of DNA damaged by oxidation or by mutagenic agents. Acts as a DNA glycosylase that recognizes and removes damaged bases. Has AP (apurinic/apyrimidinic) lyase activity and introduces nicks in the DNA strand. Cleaves the DNA backbone by beta-delta elimination to generate a single-strand break at the site of the removed base with both 3'- and 5'-phosphates. The sequence is that of Endonuclease 8 1 (nei1) from Mycobacterium bovis (strain ATCC BAA-935 / AF2122/97).